The primary structure comprises 246 residues: 3-oxoacyl-[acyl-carrier-protein] reductase FabG (246 aa).

NADP(+) contacts are provided by residues 11 to 14 (GASR), 62 to 63 (NV), and Asn-89. Ser-141 is a substrate binding site. Residue Tyr-154 is the Proton acceptor of the active site. Residues 154-158 (YVATK) and Ile-187 each bind NADP(+).

Belongs to the short-chain dehydrogenases/reductases (SDR) family. Homotetramer.

The enzyme catalyses a (3R)-hydroxyacyl-[ACP] + NADP(+) = a 3-oxoacyl-[ACP] + NADPH + H(+). It functions in the pathway lipid metabolism; fatty acid biosynthesis. Its function is as follows. Catalyzes the NADPH-dependent reduction of beta-ketoacyl-ACP substrates to beta-hydroxyacyl-ACP products, the first reductive step in the elongation cycle of fatty acid biosynthesis. The polypeptide is 3-oxoacyl-[acyl-carrier-protein] reductase FabG (fabG) (Staphylococcus aureus (strain Mu50 / ATCC 700699)).